We begin with the raw amino-acid sequence, 534 residues long: CTP synthase (534 aa).

The tract at residues 1–267 is amidoligase domain; that stretch reads MTKYIFVTGG…DQIVCDHLKL (267 aa). Ser13 serves as a coordination point for CTP. Ser13 is a UTP binding site. 14 to 19 contributes to the ATP binding site; it reads SIGKGI. Position 54 (Tyr54) interacts with L-glutamine. Asp71 provides a ligand contact to ATP. Residues Asp71 and Glu141 each contribute to the Mg(2+) site. Residues 148–150, 188–193, and Lys224 each bind CTP; these read DIE and KTKPTQ. UTP is bound by residues 188 to 193 and Lys224; that span reads KTKPTQ. Residue 240–242 participates in ATP binding; sequence RDV. Residues 292 to 534 enclose the Glutamine amidotransferase type-1 domain; that stretch reads KIALVGKYVE…FVTAAIKNSN (243 aa). An L-glutamine-binding site is contributed by Gly354. Cys381 (nucleophile; for glutamine hydrolysis) is an active-site residue. L-glutamine is bound by residues 382-385, Glu405, and Arg463; that span reads LGMQ. Active-site residues include His508 and Glu510.

The protein belongs to the CTP synthase family. Homotetramer.

The enzyme catalyses UTP + L-glutamine + ATP + H2O = CTP + L-glutamate + ADP + phosphate + 2 H(+). It carries out the reaction L-glutamine + H2O = L-glutamate + NH4(+). The catalysed reaction is UTP + NH4(+) + ATP = CTP + ADP + phosphate + 2 H(+). The protein operates within pyrimidine metabolism; CTP biosynthesis via de novo pathway; CTP from UDP: step 2/2. Its activity is regulated as follows. Allosterically activated by GTP, when glutamine is the substrate; GTP has no effect on the reaction when ammonia is the substrate. The allosteric effector GTP functions by stabilizing the protein conformation that binds the tetrahedral intermediate(s) formed during glutamine hydrolysis. Inhibited by the product CTP, via allosteric rather than competitive inhibition. Functionally, catalyzes the ATP-dependent amination of UTP to CTP with either L-glutamine or ammonia as the source of nitrogen. Regulates intracellular CTP levels through interactions with the four ribonucleotide triphosphates. The chain is CTP synthase from Streptococcus pyogenes serotype M18 (strain MGAS8232).